The following is a 398-amino-acid chain: Tryptophan synthase beta chain (398 aa).

Residue K88 is modified to N6-(pyridoxal phosphate)lysine.

Belongs to the TrpB family. Tetramer of two alpha and two beta chains. It depends on pyridoxal 5'-phosphate as a cofactor.

The enzyme catalyses (1S,2R)-1-C-(indol-3-yl)glycerol 3-phosphate + L-serine = D-glyceraldehyde 3-phosphate + L-tryptophan + H2O. It participates in amino-acid biosynthesis; L-tryptophan biosynthesis; L-tryptophan from chorismate: step 5/5. The beta subunit is responsible for the synthesis of L-tryptophan from indole and L-serine. In Mannheimia succiniciproducens (strain KCTC 0769BP / MBEL55E), this protein is Tryptophan synthase beta chain.